The primary structure comprises 267 residues: Putative ankyrin repeat protein RF_1099 (267 aa).

4 ANK repeats span residues 46-75 (DPIT…GVNQ), 78-107 (LGWV…SMSL), 136-165 (DGIT…NPNV), and 170-199 (TGMT…DPNI). A coiled-coil region spans residues 238 to 265 (KQKIIKERNSIKTRNKEKEKEIKKLFNS).

In Rickettsia felis (strain ATCC VR-1525 / URRWXCal2) (Rickettsia azadi), this protein is Putative ankyrin repeat protein RF_1099.